Here is a 270-residue protein sequence, read N- to C-terminus: tRNA (guanine-N(1)-)-methyltransferase (270 aa).

Residues G117 and 137-142 (IGDYVL) contribute to the S-adenosyl-L-methionine site.

The protein belongs to the RNA methyltransferase TrmD family. Homodimer.

Its subcellular location is the cytoplasm. It catalyses the reaction guanosine(37) in tRNA + S-adenosyl-L-methionine = N(1)-methylguanosine(37) in tRNA + S-adenosyl-L-homocysteine + H(+). In terms of biological role, specifically methylates guanosine-37 in various tRNAs. This Heliobacterium modesticaldum (strain ATCC 51547 / Ice1) protein is tRNA (guanine-N(1)-)-methyltransferase.